The following is a 386-amino-acid chain: Diaminopimelate decarboxylase (386 aa).

Residue lysine 49 is modified to N6-(pyridoxal phosphate)lysine. Residues glycine 228 and 266 to 269 contribute to the pyridoxal 5'-phosphate site; that span reads ELGR. Positions 269, 305, 309, 335, and 363 each coordinate substrate. Residue tyrosine 363 coordinates pyridoxal 5'-phosphate.

The protein belongs to the Orn/Lys/Arg decarboxylase class-II family. LysA subfamily. As to quaternary structure, homodimer. Pyridoxal 5'-phosphate is required as a cofactor.

It catalyses the reaction meso-2,6-diaminopimelate + H(+) = L-lysine + CO2. It participates in amino-acid biosynthesis; L-lysine biosynthesis via DAP pathway; L-lysine from DL-2,6-diaminopimelate: step 1/1. Specifically catalyzes the decarboxylation of meso-diaminopimelate (meso-DAP) to L-lysine. This Bacteroides thetaiotaomicron (strain ATCC 29148 / DSM 2079 / JCM 5827 / CCUG 10774 / NCTC 10582 / VPI-5482 / E50) protein is Diaminopimelate decarboxylase.